Here is a 353-residue protein sequence, read N- to C-terminus: Photosystem II protein D1 (353 aa).

At T2 the chain carries N-acetylthreonine. T2 carries the post-translational modification Phosphothreonine. 3 helical membrane-spanning segments follow: residues 29-46 (YIGWFGVLMIPTLLTATS), 118-133 (HFLLGVACYMGREWEL), and 142-156 (WIAVAYSAPVAAATA). H118 is a binding site for chlorophyll a. Y126 provides a ligand contact to pheophytin a. [CaMn4O5] cluster-binding residues include D170 and E189. The chain crosses the membrane as a helical span at residues 197–218 (FHMLGVAGVFGGSLFSAMHGSL). H198 provides a ligand contact to chlorophyll a. Residues H215 and 264-265 (SF) contribute to the a quinone site. A Fe cation-binding site is contributed by H215. H272 contributes to the Fe cation binding site. Residues 274–288 (FLAAWPVVGIWFTAL) form a helical membrane-spanning segment. Positions 332, 333, 342, and 344 each coordinate [CaMn4O5] cluster. Residues 345–353 (SVEAPSTNG) constitute a propeptide that is removed on maturation.

The protein belongs to the reaction center PufL/M/PsbA/D family. PSII is composed of 1 copy each of membrane proteins PsbA, PsbB, PsbC, PsbD, PsbE, PsbF, PsbH, PsbI, PsbJ, PsbK, PsbL, PsbM, PsbT, PsbX, PsbY, PsbZ, Psb30/Ycf12, at least 3 peripheral proteins of the oxygen-evolving complex and a large number of cofactors. It forms dimeric complexes. The D1/D2 heterodimer binds P680, chlorophylls that are the primary electron donor of PSII, and subsequent electron acceptors. It shares a non-heme iron and each subunit binds pheophytin, quinone, additional chlorophylls, carotenoids and lipids. D1 provides most of the ligands for the Mn4-Ca-O5 cluster of the oxygen-evolving complex (OEC). There is also a Cl(-1) ion associated with D1 and D2, which is required for oxygen evolution. The PSII complex binds additional chlorophylls, carotenoids and specific lipids. serves as cofactor. Post-translationally, tyr-161 forms a radical intermediate that is referred to as redox-active TyrZ, YZ or Y-Z. C-terminally processed by CTPA; processing is essential to allow assembly of the oxygen-evolving complex and thus photosynthetic growth.

Its subcellular location is the plastid. It localises to the chloroplast thylakoid membrane. The enzyme catalyses 2 a plastoquinone + 4 hnu + 2 H2O = 2 a plastoquinol + O2. Photosystem II (PSII) is a light-driven water:plastoquinone oxidoreductase that uses light energy to abstract electrons from H(2)O, generating O(2) and a proton gradient subsequently used for ATP formation. It consists of a core antenna complex that captures photons, and an electron transfer chain that converts photonic excitation into a charge separation. The D1/D2 (PsbA/PsbD) reaction center heterodimer binds P680, the primary electron donor of PSII as well as several subsequent electron acceptors. The chain is Photosystem II protein D1 from Acorus calamus (Sweet flag).